A 327-amino-acid polypeptide reads, in one-letter code: DNA-directed RNA polymerase subunit alpha (327 aa).

The tract at residues methionine 1–glutamate 233 is alpha N-terminal domain (alpha-NTD). The tract at residues glutamate 266–lysine 327 is alpha C-terminal domain (alpha-CTD).

Belongs to the RNA polymerase alpha chain family. In plastids the minimal PEP RNA polymerase catalytic core is composed of four subunits: alpha, beta, beta', and beta''. When a (nuclear-encoded) sigma factor is associated with the core the holoenzyme is formed, which can initiate transcription.

The protein localises to the plastid. The protein resides in the chloroplast. The catalysed reaction is RNA(n) + a ribonucleoside 5'-triphosphate = RNA(n+1) + diphosphate. DNA-dependent RNA polymerase catalyzes the transcription of DNA into RNA using the four ribonucleoside triphosphates as substrates. The sequence is that of DNA-directed RNA polymerase subunit alpha from Barbarea verna (Land cress).